The following is a 391-amino-acid chain: Ferrochelatase (391 aa).

2 residues coordinate Fe cation: histidine 196 and glutamate 281.

Belongs to the ferrochelatase family.

It is found in the cytoplasm. The catalysed reaction is heme b + 2 H(+) = protoporphyrin IX + Fe(2+). The protein operates within porphyrin-containing compound metabolism; protoheme biosynthesis; protoheme from protoporphyrin-IX: step 1/1. Functionally, catalyzes the ferrous insertion into protoporphyrin IX. The protein is Ferrochelatase of Parasynechococcus marenigrum (strain WH8102).